The primary structure comprises 153 residues: ORM1-like protein 2 (153 aa).

Residues 1-21 are Cytoplasmic-facing; it reads MNVGVAHSEVNPNTRVMNSRG. A run of 2 helical transmembrane segments spans residues 22–42 and 43–63; these read IWLA…SIPF and FSIP…TYVF. Topologically, residues 64-105 are cytoplasmic; the sequence is LHTVKGTPFETPDQGKARLLTHWEQMDYGLQFTSSRKFLSIS. Residues 106–126 form a helical membrane-spanning segment; that stretch reads PIVLYLLASFYTKYDAAHFLI. The Extracellular segment spans residues 127 to 153; it reads NTASLLSVLLPKLPQFHGVRVFGINKY.

The protein belongs to the ORM family. As to quaternary structure, ceramide-sensitive subunit of the serine palmitoyltransferase (SPT) complex, which is also composed of SPTLC1, SPTLC2/3 and SPTSSA/B. As to expression, widely expressed. Expressed in adult and fetal heart, brain, lung, liver, skeletal muscle and kidney. Expressed in adult pancreas and placenta and in fetal spleen abd thymus.

Its subcellular location is the endoplasmic reticulum membrane. Plays an essential role in the homeostatic regulation of sphingolipid de novo biosynthesis by modulating the activity of the serine palmitoyltransferase (SPT) in response to ceramide levels. When complexed to SPT, the binding of ceramides to its N-terminus stabilizes a conformation that block SPT substrate entry, hence preventing SPT catalytic activity. Through this mechanism, maintains ceramide levels at sufficient concentrations for the production of complex sphingolipids, but which prevents the accumulation of ceramides to levels that trigger apoptosis. This is ORM1-like protein 2 (ORMDL2) from Homo sapiens (Human).